The primary structure comprises 624 residues: Phosphatidylserine decarboxylase proenzyme 2 (624 aa).

The segment at 1 to 30 is disordered; it reads MGHSPSRHNACGGGGGDGESPPSPLPSRFE. The C2 domain occupies 16 to 129; sequence GDGESPPSPL…KDLDEHSEVL (114 aa). EF-hand domains are found at residues 156–191 and 192–227; these read TEQS…FGNK and LAVA…QQEK. Residues aspartate 169, asparagine 171, aspartate 173, glutamate 175, glutamate 180, aspartate 205, asparagine 207, aspartate 209, and glutamate 216 each coordinate Ca(2+). Residues aspartate 425, histidine 481, and serine 569 each act as charge relay system; for autoendoproteolytic cleavage activity in the active site. Catalysis depends on serine 569, which acts as the Schiff-base intermediate with substrate; via pyruvic acid; for decarboxylase activity. At serine 569 the chain carries Pyruvic acid (Ser); by autocatalysis.

Belongs to the phosphatidylserine decarboxylase family. PSD-B subfamily. Eukaryotic type II sub-subfamily. In terms of assembly, heterodimer of a large membrane-associated beta subunit and a small pyruvoyl-containing alpha subunit. Pyruvate is required as a cofactor. In terms of processing, is synthesized initially as an inactive proenzyme. Formation of the active enzyme involves a self-maturation process in which the active site pyruvoyl group is generated from an internal serine residue via an autocatalytic post-translational modification. Two non-identical subunits are generated from the proenzyme in this reaction, and the pyruvate is formed at the N-terminus of the alpha chain, which is derived from the carboxyl end of the proenzyme. The autoendoproteolytic cleavage occurs by a canonical serine protease mechanism, in which the side chain hydroxyl group of the serine supplies its oxygen atom to form the C-terminus of the beta chain, while the remainder of the serine residue undergoes an oxidative deamination to produce ammonia and the pyruvoyl prosthetic group on the alpha chain. During this reaction, the Ser that is part of the protease active site of the proenzyme becomes the pyruvoyl prosthetic group, which constitutes an essential element of the active site of the mature decarboxylase.

It is found in the vacuole membrane. It localises to the endoplasmic reticulum membrane. The enzyme catalyses a 1,2-diacyl-sn-glycero-3-phospho-L-serine + H(+) = a 1,2-diacyl-sn-glycero-3-phosphoethanolamine + CO2. It participates in phospholipid metabolism; phosphatidylethanolamine biosynthesis; phosphatidylethanolamine from CDP-diacylglycerol: step 2/2. Functionally, catalyzes the formation of phosphatidylethanolamine (PtdEtn) from phosphatidylserine (PtdSer). Plays a central role in phospholipid metabolism and in the interorganelle trafficking of phosphatidylserine. The sequence is that of Phosphatidylserine decarboxylase proenzyme 2 from Oryza sativa subsp. japonica (Rice).